The following is a 155-amino-acid chain: Microsomal glutathione S-transferase 1 (155 aa).

The Lumenal segment spans residues 3-9 (DLKQLMD). A helical membrane pass occupies residues 10–33 (NEVLMAFTSYATIILAKMMFLSSA). The Cytoplasmic portion of the chain corresponds to 34–62 (TAFQRLTNKVFANPEDCAGFGKGENAKKF). Arg-38 is a glutathione binding site. An N6-acetyllysine mark is found at Lys-42, Lys-55, and Lys-60. Residues 63–96 (LRTDEKVERVRRAHLNDLENIVPFLGIGLLYSLS) form a helical membrane-spanning segment. Arg-73, Arg-74, His-76, and Glu-81 together coordinate glutathione. Residue Tyr-93 is modified to 3'-nitrotyrosine; in vitro. The Lumenal portion of the chain corresponds to 97-99 (GPD). Residues 100–123 (LSTALIHFRIFVGARIYHTIAYLT) traverse the membrane as a helical segment. A glutathione-binding site is contributed by Tyr-121. Over 124–128 (PLPQP) the chain is Cytoplasmic. The chain crosses the membrane as a helical span at residues 129-148 (NRGLAFFVGYGVTLSMAYRL). At 149 to 155 (LRSRLYL) the chain is on the lumenal side.

It belongs to the MAPEG family. In terms of assembly, homotrimer; The trimer binds only one molecule of glutathione. In vitro, peroxynitrite induces nitration at Tyr-93 which activates the enzyme. Highest in the liver, followed by kidney and testis and much lower in seminal vesicles, spleen, lung and brain.

Its subcellular location is the endoplasmic reticulum membrane. The protein resides in the mitochondrion outer membrane. The enzyme catalyses RX + glutathione = an S-substituted glutathione + a halide anion + H(+). In vitro, can be activated by reagents that attack Cys-50 sulfhydryl, such as N-ethylmaleimide and via nitration of Tyr-93 by peroxynitrite. Conjugation of reduced glutathione to a wide number of exogenous and endogenous hydrophobic electrophiles. In Rattus norvegicus (Rat), this protein is Microsomal glutathione S-transferase 1 (Mgst1).